The sequence spans 85 residues: 4-hydroxyphenylacetate decarboxylase small subunit (85 aa).

[4Fe-4S] cluster-binding residues include His-4, Cys-7, Cys-20, Cys-34, Cys-43, Cys-46, Cys-60, and Cys-78.

This sequence belongs to the HPA decarboxylase small subunit family. As to quaternary structure, heterooctamer consisting of 4 large (HpdB) subunits and 4 small (HpdC) subunits, arranged as a tetramer of heterodimers. [4Fe-4S] cluster serves as cofactor.

It carries out the reaction 4-hydroxyphenylacetate + H(+) = 4-methylphenol + CO2. It catalyses the reaction 3,4-dihydroxyphenylacetate + H(+) = 4-methylcatechol + CO2. Functionally, component of the HPA decarboxylase that decarboxylates phenylacetates with a hydroxyl group in the p-position. Active toward 4-hydroxyphenylacetate and 3,4-dihydroxyphenylacetate, forming 4-methylphenol and 4-methylcatechol, respectively. Is likely involved in the catabolism of aromatic amino acids such as tyrosine fermentation. 4-methylphenol (p-cresol) formation provides metabolic toxicity, which allows an active suppression of other microbes and may provide growth advantages for the producers in highly competitive environments. The small subunit is essential for enzymatic activity of HPA decarboxylase, and also seems to be involved in the regulation of the enzyme oligomeric state and catalytic activity. The protein is 4-hydroxyphenylacetate decarboxylase small subunit of Clostridioides difficile (strain 630) (Peptoclostridium difficile).